The sequence spans 1351 residues: Tripartite motif-containing protein 66 (1351 aa).

Residues 105–150 (MARNCSECKEKRAAHILCTYCNRWLCSSCTEEHRHSPVPGGPFFPR) form a B box-type 1; atypical zinc finger. The Zn(2+) site is built by C109, C112, C133, H139, C169, H172, C192, and H197. Residues 164 to 205 (DFTLYCPLHTQEVLKLFCETCDMLTCHSCLVVEHKEHRCRHV) form a B box-type 2 zinc finger. The stretch at 234–304 (AKQIEDRIFE…IMVLNRQFEH (71 aa)) forms a coiled coil. Disordered stretches follow at residues 542-608 (FGHH…CSQN), 663-730 (APVQ…VRKH), and 857-895 (CPLQSIPPVSDMQPETGSSSSSGRTSGSLCPRDGADPSL). The span at 560 to 588 (QLPPPPPPLPHPPPPLPPPPQQPHPPLPP) shows a compositional bias: pro residues. Positions 664–676 (PVQSQSQEETLQA) are enriched in polar residues. Residues 872–884 (TGSSSSSGRTSGS) show a composition bias toward low complexity. The PxVxL motif signature appears at 995–999 (PYVRL). The tract at residues 1067–1098 (TSLAGQRPPEVEGTSPEEHRLIPRTPGAKKGP) is disordered. The PHD-type zinc-finger motif lies at 1105–1152 (EDFCAVCLNGGELLCCDRCPKVFHLSCHVPALLSFPGGEWVCTLCRSL). Residues 1176 to 1282 (GLSMYDQKKC…VFFEGWLKEI (107 aa)) form the Bromo domain. Residues 1289–1351 (AQPRQEDSDS…FRLANSISQV (63 aa)) form a disordered region.

In terms of assembly, can form homodimers and heterodimers. Interacts with CBX5, CBX1 and CBX3 via PxVxL motif.

It is found in the nucleus. May function as transcription repressor; The repressive effects are mediated, at least in part, by recruitment of deacetylase activity. May play a role as negative regulator of postmeiotic genes acting through CBX3 complex formation and centromere association. This is Tripartite motif-containing protein 66 (TRIM66) from Homo sapiens (Human).